The primary structure comprises 163 residues: Auxin-responsive protein IAA5 (163 aa).

Positions 15 to 19 match the EAR-like (transcriptional repression) motif; that stretch reads LRLGL. The PB1 domain maps to 74-160; that stretch reads SSYVKVSVDG…KRLRIMKRSC (87 aa).

Belongs to the Aux/IAA family. In terms of assembly, homodimers and heterodimers. In terms of tissue distribution, highly expressed in stems and flowers.

Its subcellular location is the nucleus. In terms of biological role, aux/IAA proteins are short-lived transcriptional factors that function as repressors of early auxin response genes at low auxin concentrations. Repression is thought to result from the interaction with auxin response factors (ARFs), proteins that bind to the auxin-responsive promoter element (AuxRE). Formation of heterodimers with ARF proteins may alter their ability to modulate early auxin response genes expression. The polypeptide is Auxin-responsive protein IAA5 (IAA5) (Arabidopsis thaliana (Mouse-ear cress)).